Reading from the N-terminus, the 245-residue chain is 2,3-bisphosphoglycerate-dependent phosphoglycerate mutase (245 aa).

Substrate is bound by residues 8-15 (RHGQSLWN), 21-22 (TG), arginine 60, 87-90 (ERHY), lysine 98, 114-115 (RR), and 183-184 (GN). The active-site Tele-phosphohistidine intermediate is the histidine 9. Glutamate 87 functions as the Proton donor/acceptor in the catalytic mechanism.

The protein belongs to the phosphoglycerate mutase family. BPG-dependent PGAM subfamily.

The enzyme catalyses (2R)-2-phosphoglycerate = (2R)-3-phosphoglycerate. It functions in the pathway carbohydrate degradation; glycolysis; pyruvate from D-glyceraldehyde 3-phosphate: step 3/5. Functionally, catalyzes the interconversion of 2-phosphoglycerate and 3-phosphoglycerate. In Bacillus cereus (strain G9842), this protein is 2,3-bisphosphoglycerate-dependent phosphoglycerate mutase.